The sequence spans 80 residues: Exodeoxyribonuclease 7 small subunit (80 aa).

It belongs to the XseB family. As to quaternary structure, heterooligomer composed of large and small subunits.

The protein localises to the cytoplasm. The catalysed reaction is Exonucleolytic cleavage in either 5'- to 3'- or 3'- to 5'-direction to yield nucleoside 5'-phosphates.. Functionally, bidirectionally degrades single-stranded DNA into large acid-insoluble oligonucleotides, which are then degraded further into small acid-soluble oligonucleotides. This Citrobacter koseri (strain ATCC BAA-895 / CDC 4225-83 / SGSC4696) protein is Exodeoxyribonuclease 7 small subunit.